A 422-amino-acid chain; its full sequence is MFSKIKGTYDLMSDKMVCWQKVENHIRTLFAKYHLQEIRTPIIEYRGVFDRAAQHSEMVSKETYTFADKKERFITLRPEGTAGVIRSYVENKLDKTSQLHKFFYYGPCFRYERPQKGRYRQFHQVGVEILGQSNPFLDVEVIALAYETIKSLGICDITVKINSLGCKTTYNNYLQVFKNYLQAHYQQLCPLCQERFEKNILRIWDCKNCNNEPFLKQAPRIFDHLVEDAKVRFLQVLEGLKQMNVNFELCHDLVRGLDYYTHSVFEIVYNNEQGHQAVLGGGGCYDNLVTLFGGNPSPGIGFALGMERLMSILATHSFCNKNILPSLDAFILVSVPQFFYQGLALATTLRHQGFSADLNYQFLSFSKSLKQALKQQPLYLLILGPKEFDNNQITIKNTDTQQQTTILQKDVVSYFQNNKELN.

It belongs to the class-II aminoacyl-tRNA synthetase family. Homodimer.

The protein resides in the cytoplasm. It carries out the reaction tRNA(His) + L-histidine + ATP = L-histidyl-tRNA(His) + AMP + diphosphate + H(+). The protein is Histidine--tRNA ligase of Onion yellows phytoplasma (strain OY-M).